The sequence spans 535 residues: Methylmalonate-semialdehyde/malonate-semialdehyde dehydrogenase [acylating], mitochondrial (535 aa).

The N-terminal 32 residues, 1–32, are a transit peptide targeting the mitochondrion; that stretch reads MAAAVAAAAAVRSRILQVSSKVNSTWYPASSF. 4 positions are modified to N6-acetyllysine; alternate: lysine 47, lysine 52, lysine 55, and lysine 76. N6-succinyllysine; alternate is present on residues lysine 47, lysine 52, lysine 55, and lysine 76. Lysine 87 carries the post-translational modification N6-acetyllysine. An N6-acetyllysine; alternate mark is found at lysine 117 and lysine 129. N6-succinyllysine; alternate is present on residues lysine 117 and lysine 129. 6 residues coordinate NAD(+): alanine 183, phenylalanine 185, lysine 209, glutamate 212, arginine 213, and serine 262. Phosphoserine is present on serine 262. Lysine 298 bears the N6-acetyllysine mark. Cysteine 317 serves as the catalytic Nucleophile. N6-acetyllysine occurs at positions 330 and 331. An N6-acetyllysine; alternate mark is found at lysine 364 and lysine 376. Residues lysine 364 and lysine 376 each carry the N6-succinyllysine; alternate modification. Serine 380 carries the post-translational modification Phosphoserine. The residue at position 391 (lysine 391) is an N6-succinyllysine. Glutamate 417 contacts NAD(+). Lysine 500 is subject to N6-acetyllysine. Lysine 517 is subject to N6-succinyllysine.

This sequence belongs to the aldehyde dehydrogenase family. In terms of assembly, homotetramer. In terms of tissue distribution, expressed in the head and flagellum of epididymal sperm but not in testicular sperm (at protein level). Kidney &gt; liver &gt; heart &gt; muscle &gt; brain.

The protein localises to the mitochondrion. The catalysed reaction is 3-oxopropanoate + NAD(+) + CoA + H2O = hydrogencarbonate + acetyl-CoA + NADH + H(+). It carries out the reaction 2-methyl-3-oxopropanoate + NAD(+) + CoA + H2O = propanoyl-CoA + hydrogencarbonate + NADH + H(+). The enzyme catalyses (R)-2-methyl-3-oxopropanoate + NAD(+) + CoA + H2O = propanoyl-CoA + hydrogencarbonate + NADH + H(+). It catalyses the reaction (S)-2-methyl-3-oxopropanoate + NAD(+) + CoA + H2O = propanoyl-CoA + hydrogencarbonate + NADH + H(+). In terms of biological role, malonate and methylmalonate semialdehyde dehydrogenase involved in the catabolism of valine, thymine, and compounds catabolized by way of beta-alanine, including uracil and cytidine. In Rattus norvegicus (Rat), this protein is Methylmalonate-semialdehyde/malonate-semialdehyde dehydrogenase [acylating], mitochondrial.